Consider the following 81-residue polypeptide: Defensin-like protein b (81 aa).

The N-terminal stretch at 1 to 26 (MRNATFFIVFYVFISLVLSNVQDVTA) is a signal peptide. Cystine bridges form between Cys31–Cys81, Cys42–Cys66, Cys50–Cys76, and Cys64–Cys78.

Belongs to the DEFL family. As to expression, expressed in microspores and in young and mature anthers.

The protein resides in the secreted. In terms of biological role, involved in self-incompatibility. This is Defensin-like protein b (SCRb-1) from Arabidopsis lyrata (Lyre-leaved rock-cress).